Consider the following 305-residue polypeptide: UDP-3-O-acyl-N-acetylglucosamine deacetylase (305 aa).

His79, His238, and Asp242 together coordinate Zn(2+). The active-site Proton donor is the His265.

It belongs to the LpxC family. The cofactor is Zn(2+).

It catalyses the reaction a UDP-3-O-[(3R)-3-hydroxyacyl]-N-acetyl-alpha-D-glucosamine + H2O = a UDP-3-O-[(3R)-3-hydroxyacyl]-alpha-D-glucosamine + acetate. It participates in glycolipid biosynthesis; lipid IV(A) biosynthesis; lipid IV(A) from (3R)-3-hydroxytetradecanoyl-[acyl-carrier-protein] and UDP-N-acetyl-alpha-D-glucosamine: step 2/6. Catalyzes the hydrolysis of UDP-3-O-myristoyl-N-acetylglucosamine to form UDP-3-O-myristoylglucosamine and acetate, the committed step in lipid A biosynthesis. In Erwinia tasmaniensis (strain DSM 17950 / CFBP 7177 / CIP 109463 / NCPPB 4357 / Et1/99), this protein is UDP-3-O-acyl-N-acetylglucosamine deacetylase.